A 256-amino-acid chain; its full sequence is Major prion protein 2 (256 aa).

The N-terminal stretch at 1–24 is a signal peptide; sequence MVKSHIGSWILVLFVAMWSDVALC. Residues 25-233 form an interaction with GRB2, ERI3 and SYN1 region; the sequence is KKRPKPGGGW…ESEAYYQRGA (209 aa). The interval 28 to 110 is disordered; sequence PKPGGGWNTG…QWNKPSKPKT (83 aa). 5 tandem repeats follow at residues 54–62, 63–70, 71–78, 79–86, and 87–95. Residues 54–95 are 5 X 8 AA tandem repeats of P-H-G-G-G-W-G-Q; it reads PQEGGDWGQPHGGGWGQPHVGGWGQPHGGGWGQPHGGGGWGQ. Positions 58 to 99 are enriched in gly residues; that stretch reads GDWGQPHGGGWGQPHVGGWGQPHGGGWGQPHGGGGWGQGGTH. Positions 64, 65, 66, 72, 74, 80, 81, 82, 88, 90, and 91 each coordinate Cu(2+). C182 and C217 are joined by a disulfide. Residues N184 and N200 are each glycosylated (N-linked (GlcNAc...) asparagine). A233 carries the GPI-anchor amidated alanine lipid modification. Residues 234 to 256 constitute a propeptide, removed in mature form; sequence SVILFSSPPVILLISFLIFLIVG.

The protein belongs to the prion family. As to quaternary structure, monomer and homodimer. Has a tendency to aggregate into amyloid fibrils containing a cross-beta spine, formed by a steric zipper of superposed beta-strands. Soluble oligomers may represent an intermediate stage on the path to fibril formation. Copper binding may promote oligomerization. Interacts with GRB2, APP, ERI3/PRNPIP and SYN1. Mislocalized cytosolically exposed PrP interacts with MGRN1; this interaction alters MGRN1 subcellular location and causes lysosomal enlargement. Interacts with KIAA1191.

The protein localises to the cell membrane. It is found in the golgi apparatus. In terms of biological role, its primary physiological function is unclear. Has cytoprotective activity against internal or environmental stresses. May play a role in neuronal development and synaptic plasticity. May be required for neuronal myelin sheath maintenance. May play a role in iron uptake and iron homeostasis. Soluble oligomers are toxic to cultured neuroblastoma cells and induce apoptosis (in vitro). Association with GPC1 (via its heparan sulfate chains) targets PRNP to lipid rafts. Also provides Cu(2+) or Zn(2+) for the ascorbate-mediated GPC1 deaminase degradation of its heparan sulfate side chains. The polypeptide is Major prion protein 2 (Tragelaphus strepsiceros (Greater kudu)).